We begin with the raw amino-acid sequence, 410 residues long: MATHVAIIGNGVGGFTTAQALRAEGFEGRISLIGDEPHLPYDRPSLSKAVLDGSLERPPILAEADWYGEARIDMLTGPEVTALDVQTRTISLDDGTTLSADAIVIATGSRARTMALPGSQLPGVVTLRTYGDVQVLRDSWTSATRLLIVGGGLIGCEVATTARKLGLSVTILEAGDELLVRVLGRRIGAWLRGLLTELGVQVELGTGVVGFSGEGQLEQVMASDGRSFVADSALICVGAEPADQLARQAGLACDRGVIVDHCGATLAKGVFAVGDVASWPLRAGGRRSLETYMNAQRQAAAVAAAILGKNVSAPQLPVSWTEIAGHRMQMAGDIEGPGDFVSRGMPGSGAALLFRLQERRIQAVVAVDAPRDFALATRLVEARAAIEPARLADLSNSMRDFVRANEGDLT.

4–35 (HVAIIGNGVGGFTTAQALRAEGFEGRISLIGD) provides a ligand contact to FAD. 145 to 173 (RLLIVGGGLIGCEVATTARKLGLSVTILE) contacts NAD(+).

The protein belongs to the bacterial ring-hydroxylating dioxygenase ferredoxin reductase family. As to quaternary structure, this dioxygenase system consists of four proteins: the two subunits of the hydroxylase component (todC1 and todC2), a ferredoxin (TodB) and a ferredoxin reductase (TodA). FAD serves as cofactor.

The catalysed reaction is 2 reduced [2Fe-2S]-[ferredoxin] + NAD(+) + H(+) = 2 oxidized [2Fe-2S]-[ferredoxin] + NADH. The protein operates within xenobiotic degradation; toluene degradation. Its function is as follows. Part of the electron transfer component of toluene 1,2-dioxygenase, transfers electrons from ferredoxin (TodB) to NADH. This Pseudomonas putida (strain ATCC 700007 / DSM 6899 / JCM 31910 / BCRC 17059 / LMG 24140 / F1) protein is Toluene 1,2-dioxygenase system ferredoxin--NAD(+) reductase component (todA).